We begin with the raw amino-acid sequence, 957 residues long: MTQTLSQLENSGAFIERHIGPDAAQQQEMLNAVGAQSLNALTGQIVPKDIQLATPPQVGAPATEYAALAELKAIASRNKRFTSYIGMGYTAVQLPPVILRNMLENPGWYTAYTPYQPEVSQGRLEALLNFQQVTLDLTGLDMASASLLDEATAAAEAMAMAKRVSKLKNANRFFVASDVHPQTLDVVRTRAETFGFEVIVDDAQKVLDHQDVFGVLLQQVGTTGEIHDYTALISELKSRKIVVSVAADIMALVLLTAPGKQGADIVFGSAQRFGVPMGYGGPHAAFFAAKDEYKRSMPGRIIGVSKDAAGNTALRMAMQTREQHIRREKANSNICTSQVLLANIASLYAVYHGPVGLKRIANRIHRLTDILAAGLQQKGLKLRHAHYFDTLCVEVADKAGVLTRAEAAEINLRSDILNAVGITLDETTTRENVMQLFSVLLGDNHGLEIDTLDKDVAHDSRSIQPAMLRDDEILTHPVFNRYHSETEMMRYMHSLERKDLALNQAMIPLGSCTMKLNAAAEMIPITWPEFAELHPFCPPEQAEGYQQMIAQLADWLVKLTGYDAVCMQPNSGAQGEYAGLLAIRHYHESRNEGHRDICLIPASAHGTNPASAHMAGMQVVVVACDKNGNIDLTDLRAKAEQAGDNLSCIMVTYPSTHGVYEETIREVCEVVHQFGGQVYLDGANMNAQVGITSPGFIGADVSHLNLHKTFCIPHGGGGPGMGPIGVKAHLAPFVPGHSVVQIEGMLTRQGAVSAAPFGSASILPISWMYIRMMGAEGLKKASQVAILNANYIASRLQDAFPVLYTGRDGRVAHECILDIRPLKEETGISELDIAKRLIDYGFHAPTMSFPVAGTLMVEPTESESKVELDRFIDAMLAIRAEIDQVKAAVWPLEDNPLVNAPHIQSELVAEWAHPYSREVAVFPAGVADKYWPTVKRLDDVYGDRNLFCSCVPISEYQ.

The residue at position 708 (K708) is an N6-(pyridoxal phosphate)lysine.

The protein belongs to the GcvP family. In terms of assembly, the glycine cleavage system is composed of four proteins: P, T, L and H. It depends on pyridoxal 5'-phosphate as a cofactor.

The enzyme catalyses N(6)-[(R)-lipoyl]-L-lysyl-[glycine-cleavage complex H protein] + glycine + H(+) = N(6)-[(R)-S(8)-aminomethyldihydrolipoyl]-L-lysyl-[glycine-cleavage complex H protein] + CO2. Its function is as follows. The glycine cleavage system catalyzes the degradation of glycine. The P protein binds the alpha-amino group of glycine through its pyridoxal phosphate cofactor; CO(2) is released and the remaining methylamine moiety is then transferred to the lipoamide cofactor of the H protein. In Shigella sonnei (strain Ss046), this protein is Glycine dehydrogenase (decarboxylating).